The following is a 590-amino-acid chain: Leucine-rich repeat transmembrane neuronal protein 4 (590 aa).

The signal sequence occupies residues 1–30; the sequence is MGFRLITQLKGMSVFLVLFPTLLLVMLTGA. Positions 31–61 constitute an LRRNT domain; sequence QRACPKNCRCDGKIVYCESHAFADIPENISG. The Extracellular segment spans residues 31–424; it reads QRACPKNCRC…HEYEHVSFHK (394 aa). An N-linked (GlcNAc...) asparagine glycan is attached at N58. LRR repeat units follow at residues 62 to 83, 86 to 107, 110 to 131, 134 to 155, 158 to 179, 182 to 203, 206 to 226, 230 to 251, 254 to 275, and 278 to 299; these read GSQG…QFAG, QLIW…AFQG, RLKE…TFHP, NLRN…QFKG, KLII…VFQD, NLDF…AFAG, KLKE…AHFP, NLRS…LTWT, SLHT…TFKC, and NLQK…TVNA. N126 carries an N-linked (GlcNAc...) asparagine glycan. N-linked (GlcNAc...) asparagine glycosylation occurs at N291. An LRRCT domain is found at 311–362; that stretch reads NMWECSRSICPLFYWLKNFKGNKESTMICAGPKHIQGEKVSDAVETYNICSD. Residues 425 to 445 traverse the membrane as a helical segment; sequence IIAGSVALFLSVAMILLVIYV. Residues 446–590 lie on the Cytoplasmic side of the membrane; that stretch reads SWKRYPASMK…PAIYLERITN (145 aa).

The protein belongs to the LRRTM family. As to quaternary structure, peripherally associated with AMPAR complex. AMPAR complex consists of an inner core made of 4 pore-forming GluA/GRIA proteins (GRIA1, GRIA2, GRIA3 and GRIA4) and 4 major auxiliary subunits arranged in a twofold symmetry. One of the two pairs of distinct binding sites is occupied either by CNIH2, CNIH3 or CACNG2, CACNG3. The other harbors CACNG2, CACNG3, CACNG4, CACNG8 or GSG1L. This inner core of AMPAR complex is complemented by outer core constituents binding directly to the GluA/GRIA proteins at sites distinct from the interaction sites of the inner core constituents. Outer core constituents include at least PRRT1, PRRT2, CKAMP44/SHISA9, FRRS1L and NRN1. The proteins of the inner and outer core serve as a platform for other, more peripherally associated AMPAR constituents, including LRRTM4. Alone or in combination, these auxiliary subunits control the gating and pharmacology of the AMPAR complex and profoundly impact their biogenesis and protein processing. As to expression, predominantly in the brain (at protein level). Also expressed in the cerebellum and other tissues.

It is found in the cell membrane. The protein localises to the postsynaptic cell membrane. Functionally, may play a role in the development and maintenance of the vertebrate nervous system. Exhibits strong synaptogenic activity, restricted to excitatory presynaptic differentiation. The sequence is that of Leucine-rich repeat transmembrane neuronal protein 4 (Lrrtm4) from Mus musculus (Mouse).